A 3660-amino-acid polypeptide reads, in one-letter code: Dystrophin (3660 aa).

An actin-binding region spans residues M1–P244. Calponin-homology (CH) domains are found at residues D19–Q123 and T138–P244. 22 Spectrin repeats span residues M341 to K449, I450 to D558, R561 to Q669, E721 to Y830, N832 to T936, R945 to D1047, T1050 to G1156, D1159 to E1265, A1268 to Q1369, E1470 to K1570, K1573 to E1678, K1681 to L1782, H1879 to E1981, L2013 to K2103, E2106 to E2211, N2214 to I2321, F2472 to E2574, K2577 to S2683, L2686 to A2799, D2802 to Q2904, D2906 to D2928, and E2931 to E3037. The WW domain occupies T3052–M3085. The ZZ-type; degenerate zinc-finger motif lies at K3305–T3361. Zn(2+) contacts are provided by C3310, C3313, C3334, and C3337. Disordered regions lie at residues K3503–Q3526 and P3575–M3660. Polar residues-rich tracts occupy residues N3582–P3601 and Q3637–G3647.

It localises to the cell membrane. Its subcellular location is the sarcolemma. It is found in the cytoplasm. The protein localises to the cytoskeleton. The protein resides in the postsynaptic cell membrane. Functionally, may play a role in anchoring the cytoskeleton to the plasma membrane. The protein is Dystrophin (DMD) of Gallus gallus (Chicken).